A 396-amino-acid chain; its full sequence is MAKEKFERTKPHVNVGTIGHVDHGKTTLTAAITTILSKKFGGAAKKYDEIDSSPEEKARGITINTAHVEYETASRHYAHVDCPGHADYVKNMITGAAQMDGAILVVSSADGPMPQTREHILLARQVGVPYIIVYMNKADMVDDAELLELVEMEVRELLSKYDFPGDDTPIIVGSALKALEGDQSDIGEPSIIKLAEALDTYIPEPERAIDKPFLMPVEDVFSISGRGTVVTGRVERGVIKVGEEIEIVGITPTVKTTCTGVEMFRKLLDQGQAGDNVGVLLRGTKREEVQRGQVLAKPGSIKPHTKFSAEIYVLSKDEGGRHTPFFNGYRPQFYFRTTDVTGSIELPAGTEMVMPGDNVSIKVSLIQPIAMDEGLRFAIREGGRTVGAGVVAKIEE.

One can recognise a tr-type G domain in the interval 10 to 206 (KPHVNVGTIG…ALDTYIPEPE (197 aa)). Positions 19–26 (GHVDHGKT) are G1. 19-26 (GHVDHGKT) is a GTP binding site. Thr26 provides a ligand contact to Mg(2+). A G2 region spans residues 60–64 (GITIN). Positions 81-84 (DCPG) are G3. GTP is bound by residues 81–85 (DCPGH) and 136–139 (NKAD). Residues 136-139 (NKAD) are G4. The tract at residues 174–176 (SAL) is G5.

Belongs to the TRAFAC class translation factor GTPase superfamily. Classic translation factor GTPase family. EF-Tu/EF-1A subfamily. In terms of assembly, monomer.

The protein resides in the cytoplasm. It catalyses the reaction GTP + H2O = GDP + phosphate + H(+). In terms of biological role, GTP hydrolase that promotes the GTP-dependent binding of aminoacyl-tRNA to the A-site of ribosomes during protein biosynthesis. The chain is Elongation factor Tu from Thiobacillus denitrificans (strain ATCC 25259 / T1).